The primary structure comprises 305 residues: DNA-directed RNA polymerase 35 kDa subunit (305 aa).

It belongs to the poxviridae DNA-directed RNA polymerase 35 kDa subunit family. As to quaternary structure, the DNA-dependent RNA polymerase used for intermediate and late genes expression consists of eight subunits 147 kDa, 133 kDa, 35 kDa, 30 kDa, 22 kDa, 19 kDa, 18 kDa and 7 kDa totalling more than 500 kDa in mass. The same holoenzyme, with the addition of the transcription-specificity factor RAP94, is used for early gene expression.

Its subcellular location is the virion. It carries out the reaction RNA(n) + a ribonucleoside 5'-triphosphate = RNA(n+1) + diphosphate. In terms of biological role, part of the DNA-dependent RNA polymerase which catalyzes the transcription of viral DNA into RNA using the four ribonucleoside triphosphates as substrates. Responsible for the transcription of early, intermediate and late genes. DNA-dependent RNA polymerase associates with the early transcription factor (ETF), itself composed of D6 and A7, thereby allowing the early genes transcription. Late transcription, and probably also intermediate transcription, require newly synthesized RNA polymerase. The protein is DNA-directed RNA polymerase 35 kDa subunit (OPG156) of Homo sapiens (Human).